Reading from the N-terminus, the 921-residue chain is Inner nuclear membrane protein Man1 (921 aa).

Positions Ala7 to Glu51 constitute an LEM domain. A Phosphoserine modification is found at Ser28. Disordered regions lie at residues Leu47 to Arg97, Ser136 to Gly357, and Leu374 to Pro395. 2 stretches are compositionally biased toward low complexity: residues Gln53–Gln62 and Thr72–Gly85. Phosphoserine occurs at positions 136, 137, and 140. Residues Ala217–Glu237 are compositionally biased toward acidic residues. Ser261, Ser263, and Ser287 each carry phosphoserine. The span at Ser263–Asp275 shows a compositional bias: acidic residues. Residues Ser308 to Val317 are compositionally biased toward polar residues. Gly residues predominate over residues Pro348–Gly357. Ser412 carries the post-translational modification Phosphoserine. Transmembrane regions (helical) follow at residues Met486–Met506 and Ala637–Val657. The interaction with SMAD1, SMAD2, SMAD3 and SMAD5 stretch occupies residues Val709–Ser921. Residues Gln717–Asn736 mediate DNA binding. Phosphoserine is present on Ser787. At Thr893 the chain carries Phosphothreonine. Position 921 is a phosphoserine (Ser921).

As to quaternary structure, interacts with SMAD1, SMAD2, SMAD3 and SMAD5. Binds to both phosphorylated and unphosphorylated R-SMADS.

It is found in the nucleus inner membrane. In terms of biological role, can function as a specific repressor of TGF-beta, activin, and BMP signaling through its interaction with the R-SMAD proteins. Antagonizes TGF-beta-induced cell proliferation arrest. The protein is Inner nuclear membrane protein Man1 (Lemd3) of Mus musculus (Mouse).